The following is a 72-amino-acid chain: Protein LITTLE ZIPPER 4 (72 aa).

Residues 14-44 (YIIKENERLRKKAQILNQENQQLLFELKQKL) are a coiled coil. The segment at 42-72 (QKLSKTKNSSGSNQGNNNNNNNLSSSSSASG) is disordered. Positions 49–72 (NSSGSNQGNNNNNNNLSSSSSASG) are enriched in low complexity.

As to quaternary structure, interacts with REV.

Competitive inhibitor of the HD-ZIPIII transcription factors in shoot apical meristem (SAM) development. Acts by forming non-functional heterodimers. Part of a negative feedback loop. Essential for proper functioning of stem cells in the SAM. This is Protein LITTLE ZIPPER 4 from Arabidopsis thaliana (Mouse-ear cress).